A 620-amino-acid polypeptide reads, in one-letter code: Chaperone protein HscA homolog (620 aa).

This sequence belongs to the heat shock protein 70 family.

Chaperone involved in the maturation of iron-sulfur cluster-containing proteins. Has a low intrinsic ATPase activity which is markedly stimulated by HscB. In Shewanella baltica (strain OS195), this protein is Chaperone protein HscA homolog.